Reading from the N-terminus, the 504-residue chain is Galactose/methyl galactoside import ATP-binding protein MglA (504 aa).

2 consecutive ABC transporter domains span residues 8–247 and 258–504; these read LEMN…VGRD and TPGE…TRFI. 40-47 lines the ATP pocket; it reads GENGAGKS.

Belongs to the ABC transporter superfamily. Galactose/methyl galactoside importer (TC 3.A.1.2.3) family. In terms of assembly, the complex is composed of one ATP-binding protein (MglA), two transmembrane proteins (MglC) and a solute-binding protein (MglB).

The protein localises to the cell membrane. It catalyses the reaction D-galactose(out) + ATP + H2O = D-galactose(in) + ADP + phosphate + H(+). It carries out the reaction methyl beta-D-galactoside(out) + ATP + H2O = methyl beta-D-galactoside(in) + ADP + phosphate + H(+). Functionally, part of the ABC transporter complex MglABC involved in galactose/methyl galactoside import. Responsible for energy coupling to the transport system. The sequence is that of Galactose/methyl galactoside import ATP-binding protein MglA from Clostridium tetani (strain Massachusetts / E88).